A 243-amino-acid chain; its full sequence is Terpene cyclase nodB (243 aa).

Transmembrane regions (helical) follow at residues I19–I39, M50–P70, and I75–I95. N111 is a glycosylation site (N-linked (GlcNAc...) asparagine). A run of 4 helical transmembrane segments spans residues I112–A132, I134–G154, S169–L189, and L205–W225.

It belongs to the paxB family.

The protein resides in the membrane. It functions in the pathway secondary metabolite biosynthesis. Functionally, terpene cyclase; part of the gene cluster that mediates the biosynthesis of the indole diterpenes nodulisporic acids (NA). Nodulisporic acid A (NAA) and its chemically modified derivatives are of particular significance because of their highly potent insecticidal activity against blood-feeding arthropods and lack of observable adverse effects on mammals, in particular the tremogenicity associated with the paspaline-derived IDTs is not observed. The geranylgeranyl diphosphate (GGPP) synthase ggs1, localized outside of the cluster, is proposed to catalyze the first step in nodulisporic acid biosynthesis via conversion of farnesyl pyrophosphate and isopentyl pyrophosphate into geranylgeranyl pyrophosphate (GGPP). Condensation of indole-3-glycerol phosphate with GGPP by the prenyl transferase nodC then forms 3-geranylgeranylindole (3-GGI). Epoxidation by the FAD-dependent monooxygenase nodM leads to a single-epoxidized-GGI that is substrate of the terpene cyclase nodB for cyclization to yield emindole SB. The terminal methyl carbon, C28, of emindole SB is then oxidized by the cytochrome P450 monooxygenase nodW to produce nodulisporic acid F (NAF), the pentacyclic core of NAA. NAF is converted to nodulisporic acid E (NAE) via prenylation. This step is probably performed by one of the indole diterpene prenyltransferases nodD1 or nodD2. Several oxidation steps performed by the FAD-linked oxidoreductase nodO and one of the cytochrome P450 monooxygenase nodR, nodX or nodZ further convert NAE to nodulisporic acid D (NAD). NAD is substrate of cytochrome P450 monooxygenase nodJ to produce the precursor of nodulisporic acid C (NAC), converted to NAC by one of the indole diterpene prenyltransferases nodD1 or nodD2. The FAD-dependent monooxygenase nodY2 then oxidizes NAC to nodulisporic acid B (NAB). Finally NAB is converted to NAA by one of the cytochrome P450 monooxygenases nodR, nodX or nodZ. The chain is Terpene cyclase nodB from Hypoxylon pulicicidum.